The chain runs to 485 residues: Bindin (485 aa).

The signal sequence occupies residues 1–20 (MGFHQISVIIVVLALASARA). Positions 21 to 247 (ADEFPSHTDT…DSERGARKKR (227 aa)) are excised as a propeptide. Disordered stretches follow at residues 157 to 195 (GETR…DLAP), 219 to 273 (ISGH…PAQQ), and 305 to 331 (GGGQ…SDSL). The segment covering 172 to 192 (DVSKRASPRKGDEPAGHKLKD) has biased composition (basic and acidic residues). Residues 250-264 (NQGNYPQAMNPQSRG) show a composition bias toward polar residues. Acidic residues predominate over residues 317 to 331 (AEADNADYDEYSDSL). Residues 371–379 (LRHLRHHSN) are fucose-binding domain. Residues 459-485 (QQGMGGVPQRMGGQPQGNAYNQGYRQG) form a disordered region. Over residues 465 to 475 (VPQRMGGQPQG) the composition is skewed to low complexity. Over residues 476 to 485 (NAYNQGYRQG) the composition is skewed to polar residues.

This sequence belongs to the bindin family.

It localises to the cytoplasmic vesicle. Its subcellular location is the secretory vesicle. The protein localises to the acrosome lumen. Species-specific sea urchin sperm protein required for adhesion of sperm to the egg surface during fertilization. Bindin coats the acrosomal process after it is externalized by the acrosome reaction. It binds to sulfated, fucose-containing polysaccharides on the vitelline layer receptor proteoglycans which cover the egg plasma membrane. This Mesocentrotus franciscanus (Giant red sea urchin) protein is Bindin.